We begin with the raw amino-acid sequence, 550 residues long: U-box domain-containing protein 40 (550 aa).

Residues 19-29 (KSDNLSRRESL) are compositionally biased toward basic and acidic residues. The tract at residues 19–55 (KSDNLSRRESLAGKSKWRTSLSRSSSSSSSNNNSPTK) is disordered. Residues 38–52 (SLSRSSSSSSSNNNS) show a composition bias toward low complexity. One can recognise a U-box domain in the interval 57 to 127 (EIPAEFLCPI…HSWCERRCFP (71 aa)). 5 ARM repeats span residues 260-299 (ESSRISLCTTRVISALKSLIVSRYATVQVNVTAVLVNLSL), 301-340 (KSNKVKIVRSGIVPPLIDVLKCGSVEAQEHSAGVIFSLAL), 342-381 (DENKTAIGVLGGLEPLLHLIRVGTELTRHDSALALYHLSL), 383-420 (QSNRGKLVKLGAVQMLLGMVSLGQMIGRVLLILCNMAS), and 422-464 (PVSR…GLSH).

The catalysed reaction is S-ubiquitinyl-[E2 ubiquitin-conjugating enzyme]-L-cysteine + [acceptor protein]-L-lysine = [E2 ubiquitin-conjugating enzyme]-L-cysteine + N(6)-ubiquitinyl-[acceptor protein]-L-lysine.. Its pathway is protein modification; protein ubiquitination. Functions as an E3 ubiquitin ligase. In Arabidopsis thaliana (Mouse-ear cress), this protein is U-box domain-containing protein 40 (PUB40).